A 413-amino-acid polypeptide reads, in one-letter code: N-acylneuraminate cytidylyltransferase (413 aa).

This sequence belongs to the CMP-NeuNAc synthase family. It depends on Mg(2+) as a cofactor. Mn(2+) serves as cofactor.

The protein resides in the cytoplasm. It carries out the reaction an N-acylneuraminate + CTP = a CMP-N-acyl-beta-neuraminate + diphosphate. Catalyzes the formation of CMP-N-acetylneuraminic acid (CMP-NeuNAc), which is essential for the formation of the capsule. This is N-acylneuraminate cytidylyltransferase (neuA) from Streptococcus agalactiae serotype Ia (strain ATCC 27591 / A909 / CDC SS700).